Consider the following 252-residue polypeptide: MAMTPQLAFSRMPPGFRFQPTDEQLVVDYLQRRTAAQPCVTPDITDIDVYNVDPWQLPAMAMYGSDHDRYFFTMAAREAQARRTTPSGFWKPTGTKKTIFVVAGGHEVPTAVKRRFVFYLGHHQPSGSNNNNKTSWIMHEYRLMNSPRAAVPSSSSVNRLPTDDLTEEMVLCRISNKDLPKPPFIHNSLLQFSSVGLNGDGYNYLILDHLEPPAMEYPNVGIGNVDDAAAGTDDPGDLDEEIDDSMQRNHGG.

The region spanning 12–177 (MPPGFRFQPT…EMVLCRISNK (166 aa)) is the NAC domain. The DNA-binding element occupies 110–183 (TAVKRRFVFY…ISNKDLPKPP (74 aa)). The segment at 225–252 (VDDAAAGTDDPGDLDEEIDDSMQRNHGG) is disordered. The segment covering 234–244 (DPGDLDEEIDD) has biased composition (acidic residues).

As to quaternary structure, forms heterodimers with NAC26. As to expression, expressed in stems and panicles. Expressed in developing endosperm.

It localises to the nucleus. It is found in the cytoplasm. Functionally, transcription factor involved in the regulation of seed size. Binds to DNA-specific sequences of CLPD1 and OAT promoters in vitro. The protein is NAC domain-containing protein 23 of Oryza sativa subsp. japonica (Rice).